A 714-amino-acid polypeptide reads, in one-letter code: G protein-coupled receptor kinase 2 (714 aa).

The N-terminal stretch occupies residues 1-308 (MELENIVANT…LEAQPITYKT (308 aa)). RGS domains follow at residues 53 to 174 (YGYV…SQHS) and 177 to 294 (INHK…HRYL). The disordered stretch occupies residues 141 to 229 (SNANPTETAE…GGGEGGGGGK (89 aa)). Over residues 154 to 175 (CNNTTANNCNNINNSNNSQHSS) the composition is skewed to low complexity. Composition is skewed to basic and acidic residues over residues 176-190 (DINHKKLDTRNHNGD) and 199-220 (HQDDGDESVKCQEGHDDAEKGG). Residues 309-574 (FRMYRVLGKG…GQDVMAHPFF (266 aa)) form the Protein kinase domain. Residues 315–323 (LGKGGFGEV) and Lys338 each bind ATP. The Proton acceptor role is filled by Asp435. Residues 577-642 (TQLNWRRLEA…GSVSISWQNE (66 aa)) form the AGC-kinase C-terminal domain. Ser612 carries the phosphoserine modification. A Phosphothreonine modification is found at Thr613. Positions 667–714 (INAAPEPDKAGCFPFRRKKKQPARTQPIPIPEHLLTTSHSVSSTTVES) are disordered. Positions 698-714 (EHLLTTSHSVSSTTVES) are enriched in low complexity.

This sequence belongs to the protein kinase superfamily. AGC Ser/Thr protein kinase family. GPRK subfamily. As to expression, expressed in all larval tissues and in adult ovaries. Larval CNS staining is localized to axons projecting to the optic lobes and the mushroom bodies, in the longitudinal connectives, and in cell bodies and nerves of the ring gland corpus allatum. Adult CNS staining is detectable only in cell bodies and processes associated with the ellipsoid body of the central complex and portions of the mushroom bodies. In the wing disk, expression is confined to a stripe that parallels the anterior/posterior boundary of the wing blade and the hinge region, and weak expression in the prospective notum.

The protein resides in the membrane. The enzyme catalyses [G-protein-coupled receptor] + ATP = [G-protein-coupled receptor]-phosphate + ADP + H(+). Specifically phosphorylates the activated forms of G protein-coupled receptors. Required during oogenesis and embryogenesis; component of a signaling pathway that functions during egg chamber maturation. In Drosophila melanogaster (Fruit fly), this protein is G protein-coupled receptor kinase 2 (Gprk2).